A 420-amino-acid polypeptide reads, in one-letter code: Putative sporulation-specific glycosylase YdhD (420 aa).

LysM domains are found at residues 2-45 and 48-92; these read FIHI…ALLI and YVYT…KITI. Residues 100–420 form the GH18 domain; it reads AGTLSFYVLR…LRKFFTIRKV (321 aa). Residue Glu212 is the Proton donor of the active site.

This sequence belongs to the glycosyl hydrolase 18 family. Chitinase class II subfamily.

The protein localises to the spore wall. The protein is Putative sporulation-specific glycosylase YdhD (ydhD) of Bacillus subtilis (strain 168).